The chain runs to 32 residues: Chlorophyll a-b binding protein 2, chloroplastic (32 aa).

Chlorophyll a contacts are provided by Glu19 and His22. Position 24 (Arg24) interacts with chlorophyll b.

It belongs to the light-harvesting chlorophyll a/b-binding (LHC) protein family. The LHC complex consists of chlorophyll a-b binding proteins. Requires Binds at least 14 chlorophylls (8 Chl-a and 6 Chl-b) and carotenoids such as lutein and neoxanthin. as cofactor. Post-translationally, photoregulated by reversible phosphorylation of its threonine residues.

Its subcellular location is the plastid. The protein localises to the chloroplast thylakoid membrane. In terms of biological role, the light-harvesting complex (LHC) functions as a light receptor, it captures and delivers excitation energy to photosystems with which it is closely associated. The chain is Chlorophyll a-b binding protein 2, chloroplastic from Populus euphratica (Euphrates poplar).